Consider the following 863-residue polypeptide: Leucine-rich repeat and death domain-containing protein 1 (863 aa).

Disordered stretches follow at residues 1 to 37 (MSEK…KETS) and 51 to 100 (SSNQ…SQSL). A compositionally biased stretch (low complexity) spans 88–100 (SETSTRTETSQSL). 26 LRR repeats span residues 143 to 166 (CKDN…ILKI), 167 to 189 (KYVK…DSGD), 190 to 213 (LLGL…IQLL), 214 to 236 (HNLR…ISQL), 238 to 259 (NIRQ…LECL), 260 to 282 (GNLE…LPSL), 284 to 305 (YLRV…LCFL), 306 to 328 (PKLI…IREL), 329 to 351 (KNLE…IFQL), 353 to 374 (KIKE…IENF), 375 to 397 (RELR…ICCC), 398 to 420 (AMLE…IHKL), 422 to 443 (NLRK…ISHL), 445 to 466 (NICS…IKNC), 468 to 489 (KIIK…LCAL), 490 to 513 (DSLY…SFSK), 515 to 535 (LLHL…FCSL), 536 to 558 (INLK…ISNM), 560 to 581 (SLHV…LCTL), 582 to 604 (ENLR…ICNL), 606 to 627 (RIQK…LCQL), 630 to 653 (LEQL…LSNM), 654 to 676 (TQLK…IGEL), 678 to 699 (NLVS…LLSL), 700 to 722 (NDLQ…IYNL), and 724 to 745 (SLKE…ICKG). Residues 767 to 855 (EKIFKIVANN…EIMDKITALN (89 aa)) enclose the Death domain. One copy of the LRR 27 repeat lies at 856–863 (LFTRAIKF).

In Macaca fascicularis (Crab-eating macaque), this protein is Leucine-rich repeat and death domain-containing protein 1 (LRRD1).